Reading from the N-terminus, the 108-residue chain is UPF0251 protein PF0620 (108 aa).

It belongs to the UPF0251 family.

The polypeptide is UPF0251 protein PF0620 (Pyrococcus furiosus (strain ATCC 43587 / DSM 3638 / JCM 8422 / Vc1)).